The following is a 585-amino-acid chain: MAGUK p55 subfamily member 3 (585 aa).

2 L27 domains span residues 6-60 and 61-118; these read EDSG…ERQS and PTPV…FDPV. Residues 137 to 212 enclose the PDZ domain; sequence IVRLVKNKEP…LAQSQGSITL (76 aa). One can recognise an SH3 domain in the interval 226 to 296; the sequence is ESKVFMRALF…PSKGFQERRL (71 aa). At Ser307 the chain carries Phosphoserine. The Guanylate kinase-like domain occupies 385–570; the sequence is PRLVVLIGSL…AYSQLKVVLE (186 aa).

The protein belongs to the MAGUK family. In terms of assembly, interacts with HTR2C; this interaction stabilizes the receptor at the plasma membrane and prevents the desensitization of the HTR2C receptor-mediated calcium response. Interacts with HTR2A. Interacts with HTR4. Interacts (via PDZ domain) with CADM1 (via C-terminus)Interacts (via PDZ domain) with CADM1; this interaction connects CADM1 with DLG1. Interacts (via Guanylate kinase-like domain) with PALS1. Interacts with DLG1 (via N-terminus); this interaction connects CADM1 with DLG1 and links CADM1 with the regulatory subunit of phosphoinositide-3-kinase (PI3K) by forming a multiprotein complex and participates in cell spreading. Expressed in retina (at protein level) at the subapical region (SAR) adjacent to adherens junctions at the OLM, and at the OPL.

It is found in the cell membrane. The protein resides in the apical cell membrane. Its subcellular location is the cell junction. It localises to the adherens junction. In terms of biological role, participates in cell spreading through the phosphoinositide-3-kinase (PI3K) pathway by connecting CADM1 to DLG1 and the regulatory subunit of phosphoinositide-3-kinase (PI3K). Stabilizes HTR2C at the plasma membrane and prevents its desensitization. May participates in the maintenance of adherens junctions. The sequence is that of MAGUK p55 subfamily member 3 from Homo sapiens (Human).